Consider the following 338-residue polypeptide: Replication factor C small subunit (338 aa).

53 to 60 (GPPGVGKT) is an ATP binding site.

Belongs to the activator 1 small subunits family. RfcS subfamily. Heteromultimer composed of small subunits (RfcS) and large subunits (RfcL).

In terms of biological role, part of the RFC clamp loader complex which loads the PCNA sliding clamp onto DNA. This chain is Replication factor C small subunit, found in Methanosarcina mazei (strain ATCC BAA-159 / DSM 3647 / Goe1 / Go1 / JCM 11833 / OCM 88) (Methanosarcina frisia).